The primary structure comprises 150 residues: Deoxyuridine 5'-triphosphate nucleotidohydrolase (150 aa).

Substrate-binding positions include 69 to 71 (RSG), N82, 86 to 88 (TID), and K96.

It belongs to the dUTPase family. It depends on Mg(2+) as a cofactor.

The enzyme catalyses dUTP + H2O = dUMP + diphosphate + H(+). Its pathway is pyrimidine metabolism; dUMP biosynthesis; dUMP from dCTP (dUTP route): step 2/2. This enzyme is involved in nucleotide metabolism: it produces dUMP, the immediate precursor of thymidine nucleotides and it decreases the intracellular concentration of dUTP so that uracil cannot be incorporated into DNA. This Aquifex aeolicus (strain VF5) protein is Deoxyuridine 5'-triphosphate nucleotidohydrolase.